Consider the following 83-residue polypeptide: U5-theraphotoxin-Hs1a 1 (83 aa).

Positions 1-21 (MKTSMFLTLTGLGLLFVVCYA) are cleaved as a signal peptide. The propeptide occupies 22 to 49 (SESEEKEFPKELLSSIFAADSDFKVEER). 3 disulfide bridges follow: Cys51/Cys63, Cys56/Cys68, and Cys62/Cys75.

This sequence belongs to the neurotoxin 10 (Hwtx-1) family. 51 (Hntx-8) subfamily. Hntx-8 sub-subfamily. In terms of tissue distribution, expressed by the venom gland.

The protein resides in the secreted. In terms of biological role, agglutinates human and mice erythrocytes. This activity can be specifically inhibited by mannosamine. This lectin shows very low toxicity in both mammals and insects. This Cyriopagopus schmidti (Chinese bird spider) protein is U5-theraphotoxin-Hs1a 1.